A 481-amino-acid polypeptide reads, in one-letter code: Drebrin-like protein (481 aa).

The region spanning 3–131 (SLDISDPDIT…DEKAITAALN (129 aa)) is the ADF-H domain. Residues 217–227 (YWKQQQAEKQK) show a composition bias toward basic and acidic residues. Positions 217-423 (YWKQQQAEKQ…PAEEQYDQSG (207 aa)) are disordered. Residues 228 to 237 (QQQQQQQQQA) are compositionally biased toward low complexity. The segment covering 248–261 (TVGNKFQEQVSKPT) has biased composition (polar residues). The span at 291–300 (PPAPSRPAAP) shows a compositional bias: pro residues. A compositionally biased stretch (acidic residues) spans 325–335 (QYEEPQYEEEQ). Residues 336–413 (QQQYEEQPTE…YQEEQQQYEQ (78 aa)) are compositionally biased toward low complexity. Positions 422–481 (SGYLQAKALYDYNGENDGDLSFREGDIITILDQSDPDGWWQGSLPTGEQGFFPSNFVQQL) constitute an SH3 domain.

Belongs to the ABP1 family.

The protein localises to the cytoplasm. It localises to the cytoskeleton. It is found in the cell projection. The protein resides in the pseudopodium. In terms of biological role, actin-binding adapter protein. Binds to F-actin but is not involved in actin polymerization, capping or bundling. Does not bind G-actin. Controls pseudopodium number and motility in early stages of chemotactic aggregation. The polypeptide is Drebrin-like protein (abpE-1) (Dictyostelium discoideum (Social amoeba)).